A 295-amino-acid polypeptide reads, in one-letter code: Nucleotide-binding protein SSU98_0619 (295 aa).

Residue 12-19 (GMSGAGKT) coordinates ATP. 62–65 (DMRS) contacts GTP.

Belongs to the RapZ-like family.

Displays ATPase and GTPase activities. This is Nucleotide-binding protein SSU98_0619 from Streptococcus suis (strain 98HAH33).